A 408-amino-acid chain; its full sequence is Putative glutamate--cysteine ligase 2 (408 aa).

This sequence belongs to the glutamate--cysteine ligase type 2 family. YbdK subfamily.

It carries out the reaction L-cysteine + L-glutamate + ATP = gamma-L-glutamyl-L-cysteine + ADP + phosphate + H(+). ATP-dependent carboxylate-amine ligase which exhibits weak glutamate--cysteine ligase activity. The protein is Putative glutamate--cysteine ligase 2 of Bradyrhizobium sp. (strain BTAi1 / ATCC BAA-1182).